Here is a 75-residue protein sequence, read N- to C-terminus: Cytochrome c oxidase subunit 6C (75 aa).

The Mitochondrial matrix portion of the chain corresponds to 1–13 (MAPEVLPKPQMRG). A helical transmembrane segment spans residues 14 to 54 (LLARRLRFHMVTGFVLSLGVAALYKVGVADKRKKAYADFYR). Topologically, residues 55-75 (NYDAMKDFEEMRKAGIFQSVK) are mitochondrial intermembrane.

Belongs to the cytochrome c oxidase subunit 6c family. In terms of assembly, component of the cytochrome c oxidase (complex IV, CIV), a multisubunit enzyme composed of 14 subunits. The complex is composed of a catalytic core of 3 subunits MT-CO1, MT-CO2 and MT-CO3, encoded in the mitochondrial DNA, and 11 supernumerary subunits COX4I, COX5A, COX5B, COX6A, COX6B, COX6C, COX7A, COX7B, COX7C, COX8 and NDUFA4, which are encoded in the nuclear genome. The complex exists as a monomer or a dimer and forms supercomplexes (SCs) in the inner mitochondrial membrane with NADH-ubiquinone oxidoreductase (complex I, CI) and ubiquinol-cytochrome c oxidoreductase (cytochrome b-c1 complex, complex III, CIII), resulting in different assemblies (supercomplex SCI(1)III(2)IV(1) and megacomplex MCI(2)III(2)IV(2)).

The protein resides in the mitochondrion inner membrane. Its pathway is energy metabolism; oxidative phosphorylation. In terms of biological role, component of the cytochrome c oxidase, the last enzyme in the mitochondrial electron transport chain which drives oxidative phosphorylation. The respiratory chain contains 3 multisubunit complexes succinate dehydrogenase (complex II, CII), ubiquinol-cytochrome c oxidoreductase (cytochrome b-c1 complex, complex III, CIII) and cytochrome c oxidase (complex IV, CIV), that cooperate to transfer electrons derived from NADH and succinate to molecular oxygen, creating an electrochemical gradient over the inner membrane that drives transmembrane transport and the ATP synthase. Cytochrome c oxidase is the component of the respiratory chain that catalyzes the reduction of oxygen to water. Electrons originating from reduced cytochrome c in the intermembrane space (IMS) are transferred via the dinuclear copper A center (CU(A)) of subunit 2 and heme A of subunit 1 to the active site in subunit 1, a binuclear center (BNC) formed by heme A3 and copper B (CU(B)). The BNC reduces molecular oxygen to 2 water molecules using 4 electrons from cytochrome c in the IMS and 4 protons from the mitochondrial matrix. The sequence is that of Cytochrome c oxidase subunit 6C (COX6C) from Macaca silenus (Lion-tailed macaque).